The primary structure comprises 95 residues: MALKPLQDRVLVRRVESEEKTAGGLIIPESAKEKPSEGEVVSCGDGARKDSGELIEMTVKTGDRILFGKWSGTEVTLDGEELLMMKESDILGIIT.

This sequence belongs to the GroES chaperonin family. Heptamer of 7 subunits arranged in a ring. Interacts with the chaperonin GroEL.

Its subcellular location is the cytoplasm. Its function is as follows. Together with the chaperonin GroEL, plays an essential role in assisting protein folding. The GroEL-GroES system forms a nano-cage that allows encapsulation of the non-native substrate proteins and provides a physical environment optimized to promote and accelerate protein folding. GroES binds to the apical surface of the GroEL ring, thereby capping the opening of the GroEL channel. The polypeptide is Co-chaperonin GroES (Jannaschia sp. (strain CCS1)).